An 87-amino-acid chain; its full sequence is MKLSIFFVLFFIAIAYCQPEFLDDEEDEVEETLPVAEEGRERSCITWRNSCMHNDKGCCFPWSCVCWSQTVSRNSSRKEKKCQCRLW.

Positions 1 to 17 (MKLSIFFVLFFIAIAYC) are cleaved as a signal peptide. The propeptide occupies 18-40 (QPEFLDDEEDEVEETLPVAEEGR). Cystine bridges form between Cys-44–Cys-59, Cys-51–Cys-64, Cys-58–Cys-84, and Cys-66–Cys-82.

This sequence belongs to the neurotoxin omega-lctx family. In terms of tissue distribution, expressed by the venom gland.

It localises to the secreted. Functionally, modulates Cav2.1/CACNA1A voltage-gated calcium channels (P/Q-type currents) in rat cerebellar Purkinje cells and hippocampal CA1-CA3 neurons. At saturating concentrations (&gt;10 nM) decelerates activation kinetics and slightly increases peak amplitude without affecting deactivation kinetics. In vivo, does not cause death when intravenously injected into mice. In rat models, through its activity on Cav2.1/CACNA1A, has an ameliorative effect on memory defects provoked by hyperstimulation of N-methyl-D-aspartate receptors (NMDARs) in the hippocampus. In Alopecosa marikovskyi (Wolf spider), this protein is Omega-lycotoxin-Am1b.